Here is a 323-residue protein sequence, read N- to C-terminus: Beta-ketoacyl-[acyl-carrier-protein] synthase III (323 aa).

Catalysis depends on residues Cys-113 and His-250. Positions 251–255 (QANKR) are ACP-binding. Residue Asn-280 is part of the active site.

The protein belongs to the thiolase-like superfamily. FabH family. Homodimer.

The protein localises to the cytoplasm. It catalyses the reaction malonyl-[ACP] + acetyl-CoA + H(+) = 3-oxobutanoyl-[ACP] + CO2 + CoA. The protein operates within lipid metabolism; fatty acid biosynthesis. Catalyzes the condensation reaction of fatty acid synthesis by the addition to an acyl acceptor of two carbons from malonyl-ACP. Catalyzes the first condensation reaction which initiates fatty acid synthesis and may therefore play a role in governing the total rate of fatty acid production. Possesses both acetoacetyl-ACP synthase and acetyl transacylase activities. Its substrate specificity determines the biosynthesis of branched-chain and/or straight-chain of fatty acids. This Brucella abortus biovar 1 (strain 9-941) protein is Beta-ketoacyl-[acyl-carrier-protein] synthase III.